The following is a 1734-amino-acid chain: Gag-Pol polyprotein (1734 aa).

Glycine 2 carries N-myristoyl glycine; by host lipidation. The disordered stretch occupies residues 107 to 217; sequence PSPTAPILPS…STTSRAFPLR (111 aa). Positions 109-112 match the PTAP/PSAP motif motif; it reads PTAP. The LYPX(n)L motif motif lies at 128–132; that stretch reads LYPAL. Positions 161-164 match the PPXY motif motif; the sequence is PPPY. A Phosphoserine; by host modification is found at serine 191. The segment at 344–392 is interaction with host PIAS4; sequence GRSPTNLAKVKGITQGPNESPSAFLERLKEAYRRYTPYDPEDPGQETNV. Residues 429–434 are interaction with host UBE2I; that stretch reads IFNKRE. Basic and acidic residues-rich tracts occupy residues 434–465 and 485–498; these read ETPE…EKER and RQDR…RPQL. Disordered regions lie at residues 434–498 and 512–552; these read ETPE…RPQL and WAKD…PRIT. The stretch at 437–478 forms a coiled coil; that stretch reads EEREERVRRETEEKEERRRAEEEQKEKERDRRRHREMSKLLA. The CCHC-type zinc finger occupies 501 to 518; the sequence is DQCAYCKEKGHWAKDCPK. The 71-residue stretch at 560-630 folds into the Peptidase A2 domain; that stretch reads VTFLVDTGAQ…CPYPLLGRDL (71 aa). The active-site Protease; shared with dimeric partner is aspartate 565. One can recognise a Reverse transcriptase domain in the interval 740–931; the sequence is LDQGILVPCQ…KQVKYLGYLL (192 aa). Mg(2+)-binding residues include aspartate 808, aspartate 882, aspartate 883, aspartate 1182, glutamate 1220, aspartate 1241, and aspartate 1311. An RNase H type-1 domain is found at 1173-1319; the sequence is PDADHTWYTD…ADQAAREAAI (147 aa). The HHCC-type zinc finger occupies 1386–1426; the sequence is HRLTHLGYQKMKALLDRGESPYYMLNRDKTLQYVADSCTVC. Residues 1443–1601 form the Integrase catalytic domain; it reads RGHRPGSHWE…TPYEILYGAP (159 aa). Mg(2+) is bound by residues aspartate 1454 and aspartate 1513.

The protein belongs to the retroviral Pol polyprotein family. In terms of assembly, homohexamer; further associates as homomultimer. The virus core is composed of a lattice formed from hexagonal rings, each containing six capsid monomers. Interacts (via PPXY motif) with host NEDD4. Interacts (via PSAP motif) with host TSG101. Interacts (via LYPX(n)L motif) with host PDCD6IP. As to quaternary structure, the reverse transcriptase is a monomer (Potential). Interacts (via RNase domains) with host release factor ETF1; this interaction is essential for translational readthrough of amber codon between viral gag and pol genes, as well as for viral replication. In terms of assembly, homodimer. The cofactor is Mg(2+). In terms of processing, ubiquitinated by ITCH. Gag can recruit the ubiquitin ligase Itch in an L domain-independent manner to facilitate virus release via a mechanism that involves Gag ubiquitination. Post-translationally, specific enzymatic cleavages by the viral protease yield mature proteins. The protease is released by autocatalytic cleavage. The polyprotein is cleaved during and after budding, this process is termed maturation. Sumoylated; which is required for virus replication. In terms of processing, phosphorylated on serine residues.

Its subcellular location is the virion. The protein localises to the host cell membrane. It localises to the host late endosome membrane. It is found in the host endosome. The protein resides in the host multivesicular body. Its subcellular location is the host cytoplasm. It catalyses the reaction DNA(n) + a 2'-deoxyribonucleoside 5'-triphosphate = DNA(n+1) + diphosphate. The catalysed reaction is Endonucleolytic cleavage to 5'-phosphomonoester.. Its activity is regulated as follows. Most efficiently inhibited by Amprenavir, which is able to block Gag-Pol processing in infected cells. Its function is as follows. Plays a role in budding and is processed by the viral protease during virion maturation outside the cell. During budding, it recruits, in a PPXY-dependent or independent manner, Nedd4-like ubiquitin ligases that conjugate ubiquitin molecules to Gag-Pol, or to Gag-Pol binding host factors. Interaction with HECT ubiquitin ligases probably link the viral protein to the host ESCRT pathway and facilitates release. Functionally, targets Gag and gag-pol polyproteins to the plasma membrane via a multipartite membrane binding signal, that includes its myristoylated N-terminus. Also mediates nuclear localization of the pre-integration complex. In terms of biological role, constituent of the pre-integration complex (PIC) which tethers the latter to mitotic chromosomes. This allows the integration of the viral genome into the host DNA. Forms the spherical core of the virion that encapsulates the genomic RNA-nucleocapsid complex. Its function is as follows. Involved in the packaging and encapsidation of two copies of the genome. Binds with high affinity to conserved UCUG elements within the packaging signal, located near the 5'-end of the genome. This binding is dependent on genome dimerization. Acts as a nucleic acid chaperone which is involved in rearrangement of nucleic acid secondary structures during gRNA retrotranscription. Functionally, the aspartyl protease mediates proteolytic cleavages of Gag and Gag-Pol polyproteins during or shortly after the release of the virion from the plasma membrane. Cleavages take place as an ordered, step-wise cascade to yield mature proteins. This process is called maturation. Displays maximal activity during the budding process just prior to particle release from the cell (Potential). Cleaves the translation initiation factor eIF4G leading to the inhibition of host cap-dependent translation. In terms of biological role, RT is a multifunctional enzyme that converts the viral dimeric RNA genome into dsDNA in the cytoplasm, shortly after virus entry into the cell. This enzyme displays a DNA polymerase activity that can copy either DNA or RNA templates, and a ribonuclease H (RNase H) activity that cleaves the RNA strand of RNA-DNA heteroduplexes in a partially processive 3' to 5' endonucleasic mode. Conversion of viral genomic RNA into dsDNA requires many steps. A tRNA binds to the primer-binding site (PBS) situated at the 5' end of the viral RNA. RT uses the 3' end of the tRNA primer to perform a short round of RNA-dependent minus-strand DNA synthesis. The reading proceeds through the U5 region and ends after the repeated (R) region which is present at both ends of viral RNA. The portion of the RNA-DNA heteroduplex is digested by the RNase H, resulting in a ssDNA product attached to the tRNA primer. This ssDNA/tRNA hybridizes with the identical R region situated at the 3' end of viral RNA. This template exchange, known as minus-strand DNA strong stop transfer, can be either intra- or intermolecular. RT uses the 3' end of this newly synthesized short ssDNA to perform the RNA-dependent minus-strand DNA synthesis of the whole template. RNase H digests the RNA template except for a polypurine tract (PPT) situated at the 5' end of the genome. It is not clear if both polymerase and RNase H activities are simultaneous. RNase H probably can proceed both in a polymerase-dependent (RNA cut into small fragments by the same RT performing DNA synthesis) and a polymerase-independent mode (cleavage of remaining RNA fragments by free RTs). Secondly, RT performs DNA-directed plus-strand DNA synthesis using the PPT that has not been removed by RNase H as primers. PPT and tRNA primers are then removed by RNase H. The 3' and 5' ssDNA PBS regions hybridize to form a circular dsDNA intermediate. Strand displacement synthesis by RT to the PBS and PPT ends produces a blunt ended, linear dsDNA copy of the viral genome that includes long terminal repeats (LTRs) at both ends. Catalyzes viral DNA integration into the host chromosome, by performing a series of DNA cutting and joining reactions. This enzyme activity takes place after virion entry into a cell and reverse transcription of the RNA genome in dsDNA. The first step in the integration process is 3' processing. This step requires a complex comprising the viral genome, matrix protein and integrase. This complex is called the pre-integration complex (PIC). The integrase protein removes 2 nucleotides from each 3' end of the viral DNA, leaving recessed CA OH's at the 3' ends. In the second step that requires cell division, the PIC enters cell nucleus. In the third step, termed strand transfer, the integrase protein joins the previously processed 3' ends to the 5' ends of strands of target cellular DNA at the site of integration. The last step is viral DNA integration into host chromosome. This is Gag-Pol polyprotein (pol) from AKV murine leukemia virus (AKR (endogenous) murine leukemia virus).